Consider the following 77-residue polypeptide: Sec-independent protein translocase protein TatA (77 aa).

Residues 1–21 (MGSFSIWHWLVVGILVLLLFG) form a helical membrane-spanning segment. A disordered region spans residues 41–77 (KGMSEDDAPTPAPKQIDAQRAPDLSATPTPTAETENR). The segment covering 66–77 (ATPTPTAETENR) has biased composition (polar residues).

This sequence belongs to the TatA/E family. The Tat system comprises two distinct complexes: a TatABC complex, containing multiple copies of TatA, TatB and TatC subunits, and a separate TatA complex, containing only TatA subunits. Substrates initially bind to the TatABC complex, which probably triggers association of the separate TatA complex to form the active translocon.

Its subcellular location is the cell inner membrane. Its function is as follows. Part of the twin-arginine translocation (Tat) system that transports large folded proteins containing a characteristic twin-arginine motif in their signal peptide across membranes. TatA could form the protein-conducting channel of the Tat system. The sequence is that of Sec-independent protein translocase protein TatA from Sphingopyxis alaskensis (strain DSM 13593 / LMG 18877 / RB2256) (Sphingomonas alaskensis).